The chain runs to 194 residues: Thiol:disulfide interchange protein CycY (194 aa).

A signal peptide spans M1 to S37. Residues A46–E190 enclose the Thioredoxin domain. An intrachain disulfide couples C92 to C95.

The protein belongs to the thioredoxin family. DsbE subfamily.

Its subcellular location is the periplasm. In terms of biological role, required for disulfide bond formation in some periplasmic proteins. Also acts as a disulfide oxidoreductase in cytochromes c biogenesis. The cysteines of apocytochromes c must be in the reduced state for covalent linkage between the two moieties to occur. The sequence is that of Thiol:disulfide interchange protein CycY (cycY) from Bradyrhizobium diazoefficiens (strain JCM 10833 / BCRC 13528 / IAM 13628 / NBRC 14792 / USDA 110).